The chain runs to 350 residues: Histidinol-phosphate aminotransferase 1 (350 aa).

K210 is subject to N6-(pyridoxal phosphate)lysine.

It belongs to the class-II pyridoxal-phosphate-dependent aminotransferase family. Histidinol-phosphate aminotransferase subfamily. As to quaternary structure, homodimer. It depends on pyridoxal 5'-phosphate as a cofactor.

The catalysed reaction is L-histidinol phosphate + 2-oxoglutarate = 3-(imidazol-4-yl)-2-oxopropyl phosphate + L-glutamate. The protein operates within amino-acid biosynthesis; L-histidine biosynthesis; L-histidine from 5-phospho-alpha-D-ribose 1-diphosphate: step 7/9. The protein is Histidinol-phosphate aminotransferase 1 of Pseudomonas fluorescens (strain ATCC BAA-477 / NRRL B-23932 / Pf-5).